The primary structure comprises 433 residues: Legumain (433 aa).

The first 17 residues, 1–17 (MIWEFTVLLSLVLGTGA), serve as a signal peptide directing secretion. Residues 18–25 (VPLEDPED) constitute a propeptide that is removed on maturation. Asparagine 91 carries an N-linked (GlcNAc...) asparagine glycan. Histidine 148 is an active-site residue. Asparagine 167 is a glycosylation site (N-linked (GlcNAc...) asparagine). The active-site Nucleophile is the cysteine 189. 2 N-linked (GlcNAc...) asparagine glycosylation sites follow: asparagine 263 and asparagine 272. Positions 324–433 (DLQESRRLVQ…SMNKVCHGYY (110 aa)) are excised as a propeptide. 2 disulfides stabilise this stretch: cysteine 378/cysteine 412 and cysteine 390/cysteine 429.

Belongs to the peptidase C13 family. In terms of assembly, homodimer before autocatalytic removal of the propeptide. Monomer after autocatalytic processing. May interact with integrins. Activated by autocatalytic processing at pH 4. In terms of tissue distribution, detected in kidney (at protein level).

The protein resides in the lysosome. It carries out the reaction Hydrolysis of proteins and small molecule substrates at -Asn-|-Xaa- bonds.. In terms of biological role, has a strict specificity for hydrolysis of asparaginyl bonds. Can also cleave aspartyl bonds slowly, especially under acidic conditions. Involved in the processing of proteins for MHC class II antigen presentation in the lysosomal/endosomal system. Also involved in MHC class I antigen presentation in cross-presenting dendritic cells by mediating cleavage and maturation of Perforin-2 (MPEG1), thereby promoting antigen translocation in the cytosol. Required for normal lysosomal protein degradation in renal proximal tubules. Required for normal degradation of internalized EGFR. Plays a role in the regulation of cell proliferation via its role in EGFR degradation. This Bos taurus (Bovine) protein is Legumain (LGMN).